Consider the following 49-residue polypeptide: MRFTFVLVIAATVAVLGFFGINAEPMPDPHAEPYPDAAINPKSVQSLLG.

Residues 1–23 (MRFTFVLVIAATVAVLGFFGINA) form the signal peptide. 2 AXPX repeats span residues 23-26 (AEPM) and 31-34 (AEPY). Positions 24–37 (EPMPDPHAEPYPDA) are excised as a propeptide. The residue at position 48 (L48) is a Leucine amide.

As to expression, expressed by the venom gland.

The protein resides in the secreted. The chain is Venom peptide 3 from Eumenes pomiformis (Potter wasp).